A 260-amino-acid polypeptide reads, in one-letter code: Phosphoribosylaminoimidazole-succinocarboxamide synthase (260 aa).

Belongs to the SAICAR synthetase family.

It catalyses the reaction 5-amino-1-(5-phospho-D-ribosyl)imidazole-4-carboxylate + L-aspartate + ATP = (2S)-2-[5-amino-1-(5-phospho-beta-D-ribosyl)imidazole-4-carboxamido]succinate + ADP + phosphate + 2 H(+). The protein operates within purine metabolism; IMP biosynthesis via de novo pathway; 5-amino-1-(5-phospho-D-ribosyl)imidazole-4-carboxamide from 5-amino-1-(5-phospho-D-ribosyl)imidazole-4-carboxylate: step 1/2. In Pelagibacter ubique (strain HTCC1062), this protein is Phosphoribosylaminoimidazole-succinocarboxamide synthase.